A 462-amino-acid chain; its full sequence is O-methyltransferase CTB2 (462 aa).

Asp289 serves as a coordination point for S-adenosyl-L-methionine. His340 (proton acceptor) is an active-site residue.

This sequence belongs to the class I-like SAM-binding methyltransferase superfamily. Cation-independent O-methyltransferase family. COMT subfamily.

Its pathway is mycotoxin biosynthesis. Its function is as follows. O-methyltransferase; part of the gene cluster that mediates the biosynthesis of cercosporin, a light-activated, non-host-selective toxin. The perylenequinone chromophore of cercosporin absorbs light energy to attain an electronically-activated triplet state and produces active oxygen species such as the hydroxyl radical, superoxide, hydrogen peroxide or singlet oxygen upon reaction with oxygen molecules. These reactive oxygen species cause damage to various cellular components including lipids, proteins and nucleic acids. The first step of cercosporin biosynthesis is performed by the polyketide synthase CTB1 which catalyzes the formation of nor-toralactone. The starter unit acyltransferase (SAT) domain of CTB1 initiates polyketide extension by the selective utilization of acetyl-CoA, which is elongated to the heptaketide in the beta-ketoacyl synthase (KS) domain by successive condensations with six malonyl units introduced by the malonyl acyltransferase (MAT) domain. The product template (PT) domain catalyzes C4-C9 and C2-C11 aldol cyclizations and dehydrations to a trihydroxynaphthalene, which is thought to be delivered to the thioesterase (TE) domain for product release. The bifunctional enzyme CTB3 then methylates nor-toralactone to toralactone before conducting an unusual oxidative aromatic ring opening. The O-methyltransferase CTB2 further methylates the nascent OH-6 of the CBT3 product, blocking further oxidation at this site before the reductase CTB6 reduces the 2-oxopropyl ketone at position C7, giving naphthalene. The FAD-dependent monooxygenase CTB5 in concert with the multicopper oxidase CTB12 are responsible for homodimerization of naphthalene with CTB7 installing the dioxepine moiety, finally producing cercosporin. The fasciclin domain-containing protein CTB11 might act with CTB5 and CTB12 whereas the roles of CTB9 and CTB10 have still to be elucidated. This is O-methyltransferase CTB2 from Cercospora beticola (Sugarbeet leaf spot fungus).